The primary structure comprises 404 residues: Tryptophan synthase beta chain (404 aa).

Lys94 carries the N6-(pyridoxal phosphate)lysine modification.

The protein belongs to the TrpB family. As to quaternary structure, tetramer of two alpha and two beta chains. Pyridoxal 5'-phosphate serves as cofactor.

It carries out the reaction (1S,2R)-1-C-(indol-3-yl)glycerol 3-phosphate + L-serine = D-glyceraldehyde 3-phosphate + L-tryptophan + H2O. Its pathway is amino-acid biosynthesis; L-tryptophan biosynthesis; L-tryptophan from chorismate: step 5/5. In terms of biological role, the beta subunit is responsible for the synthesis of L-tryptophan from indole and L-serine. In Staphylococcus saprophyticus subsp. saprophyticus (strain ATCC 15305 / DSM 20229 / NCIMB 8711 / NCTC 7292 / S-41), this protein is Tryptophan synthase beta chain.